Reading from the N-terminus, the 122-residue chain is Interferon alpha-inducible protein 27, mitochondrial (122 aa).

Residues 1 to 33 constitute a mitochondrion transit peptide; sequence MEASALTSSAVTSVAKVVRVASGSAVVLPLARI. The chain crosses the membrane as a helical span at residues 34 to 57; it reads ATVVIGGVVAMAAVPMVLSAMGFT. Lys69 participates in a covalent cross-link: Glycyl lysine isopeptide (Lys-Gly) (interchain with G-Cter in ubiquitin). Helical transmembrane passes span 71–91 and 99–119; these read MSAAAIANGGGVASGSLVATL and LSGLTKFILGSIGSAIAAVIA. A mediates interaction with SKP2 and hepatitis C virus non-structural protein NS5A region spans residues 76–122; that stretch reads IANGGGVASGSLVATLQSLGATGLSGLTKFILGSIGSAIAAVIARFY. The required for hepatitis C virus non-structural protein NS5A degradation stretch occupies residues 103-112; the sequence is TKFILGSIGS.

This sequence belongs to the IFI6/IFI27 family. In terms of assembly, homodimer. Interacts with hepatitis C virus/HCV non-structural protein NS5A; promotes the ubiquitin-mediated proteasomal degradation of NS5A. Interacts with SKP2; promotes the ubiquitin-mediated proteasomal degradation of NS5A. Interacts with NR4A1. May interact with BCL2. In terms of processing, ubiquitinated by TRIM21 via 'Lys-6'-linked ubiquitin chains leading to IFI27 mitochondrial migration.

The protein resides in the mitochondrion membrane. Its subcellular location is the nucleus inner membrane. It localises to the endoplasmic reticulum membrane. Its function is as follows. Probable adapter protein involved in different biological processes. Part of the signaling pathways that lead to apoptosis. Involved in type-I interferon-induced apoptosis characterized by a rapid and robust release of cytochrome C from the mitochondria and activation of BAX and caspases 2, 3, 6, 8 and 9. Also functions in TNFSF10-induced apoptosis. May also have a function in the nucleus, where it may be involved in the interferon-induced negative regulation of the transcriptional activity of NR4A1, NR4A2 and NR4A3 through the enhancement of XPO1-mediated nuclear export of these nuclear receptors. May thereby play a role in the vascular response to injury. In the innate immune response, has an antiviral activity towards hepatitis C virus/HCV. May prevent the replication of the virus by recruiting both the hepatitis C virus non-structural protein 5A/NS5A and the ubiquitination machinery via SKP2, promoting the ubiquitin-mediated proteasomal degradation of NS5A. Also promotes virus-induced pyroptosis by activating CASP3 in the mitochondria after 'Lys-6'-linked ubiquitination by TRIM21. This chain is Interferon alpha-inducible protein 27, mitochondrial, found in Homo sapiens (Human).